Consider the following 234-residue polypeptide: uncharacterized protein (234 aa).

Positions Gln65–Asn89 are disordered. An RING-type zinc finger spans residues Cys185–Lys220.

Belongs to the IIV-6 175R/332L family.

This is an uncharacterized protein from Acheta domesticus (House cricket).